Consider the following 238-residue polypeptide: tRNA (guanine-N(7)-)-methyltransferase (238 aa).

Residues Glu-62, Glu-87, Asp-119, and Asp-141 each coordinate S-adenosyl-L-methionine. Asp-141 is an active-site residue. Residues Lys-145, Asp-177, and 216-219 contribute to the substrate site; that span reads TRYE.

This sequence belongs to the class I-like SAM-binding methyltransferase superfamily. TrmB family.

It carries out the reaction guanosine(46) in tRNA + S-adenosyl-L-methionine = N(7)-methylguanosine(46) in tRNA + S-adenosyl-L-homocysteine. It participates in tRNA modification; N(7)-methylguanine-tRNA biosynthesis. In terms of biological role, catalyzes the formation of N(7)-methylguanine at position 46 (m7G46) in tRNA. This Novosphingobium aromaticivorans (strain ATCC 700278 / DSM 12444 / CCUG 56034 / CIP 105152 / NBRC 16084 / F199) protein is tRNA (guanine-N(7)-)-methyltransferase.